A 519-amino-acid polypeptide reads, in one-letter code: 2-isopropylmalate synthase (519 aa).

The Pyruvate carboxyltransferase domain occupies 12-274; it reads VVIFDTTLRD…WCNVESTTLT (263 aa). Mn(2+)-binding residues include D21, H209, H211, and N245. The segment at 398–519 is regulatory domain; sequence RLVSLTVIAG…QREAPVAAAS (122 aa).

This sequence belongs to the alpha-IPM synthase/homocitrate synthase family. LeuA type 1 subfamily. As to quaternary structure, homodimer. It depends on Mn(2+) as a cofactor.

Its subcellular location is the cytoplasm. The catalysed reaction is 3-methyl-2-oxobutanoate + acetyl-CoA + H2O = (2S)-2-isopropylmalate + CoA + H(+). It functions in the pathway amino-acid biosynthesis; L-leucine biosynthesis; L-leucine from 3-methyl-2-oxobutanoate: step 1/4. Catalyzes the condensation of the acetyl group of acetyl-CoA with 3-methyl-2-oxobutanoate (2-ketoisovalerate) to form 3-carboxy-3-hydroxy-4-methylpentanoate (2-isopropylmalate). This is 2-isopropylmalate synthase from Afipia carboxidovorans (strain ATCC 49405 / DSM 1227 / KCTC 32145 / OM5) (Oligotropha carboxidovorans).